Consider the following 330-residue polypeptide: tRNA uridine(34) hydroxylase (330 aa).

Residues Ser-123–Ser-217 enclose the Rhodanese domain. Catalysis depends on Cys-177, which acts as the Cysteine persulfide intermediate.

It belongs to the TrhO family.

The catalysed reaction is uridine(34) in tRNA + AH2 + O2 = 5-hydroxyuridine(34) in tRNA + A + H2O. In terms of biological role, catalyzes oxygen-dependent 5-hydroxyuridine (ho5U) modification at position 34 in tRNAs. This chain is tRNA uridine(34) hydroxylase, found in Shewanella sp. (strain ANA-3).